Reading from the N-terminus, the 531-residue chain is 2,3-bisphosphoglycerate-independent phosphoglycerate mutase (531 aa).

Mn(2+) contacts are provided by D13 and S63. S63 acts as the Phosphoserine intermediate in catalysis. Substrate-binding positions include H124, 154-155 (RD), R187, R193, 261-264 (RPDR), and K342. Positions 420, 424, 462, 463, and 480 each coordinate Mn(2+).

Belongs to the BPG-independent phosphoglycerate mutase family. As to quaternary structure, monomer. Mn(2+) is required as a cofactor.

It carries out the reaction (2R)-2-phosphoglycerate = (2R)-3-phosphoglycerate. The protein operates within carbohydrate degradation; glycolysis; pyruvate from D-glyceraldehyde 3-phosphate: step 3/5. Its function is as follows. Catalyzes the interconversion of 2-phosphoglycerate and 3-phosphoglycerate. The polypeptide is 2,3-bisphosphoglycerate-independent phosphoglycerate mutase (Mycoplasma capricolum subsp. capricolum (strain California kid / ATCC 27343 / NCTC 10154)).